The primary structure comprises 424 residues: Serine hydroxymethyltransferase (424 aa).

(6S)-5,6,7,8-tetrahydrofolate contacts are provided by residues leucine 118 and 122-124; that span reads GHL. The residue at position 227 (lysine 227) is an N6-(pyridoxal phosphate)lysine. 351 to 353 provides a ligand contact to (6S)-5,6,7,8-tetrahydrofolate; that stretch reads SPF.

Belongs to the SHMT family. As to quaternary structure, homodimer. Pyridoxal 5'-phosphate is required as a cofactor.

Its subcellular location is the cytoplasm. It catalyses the reaction (6R)-5,10-methylene-5,6,7,8-tetrahydrofolate + glycine + H2O = (6S)-5,6,7,8-tetrahydrofolate + L-serine. The protein operates within one-carbon metabolism; tetrahydrofolate interconversion. It participates in amino-acid biosynthesis; glycine biosynthesis; glycine from L-serine: step 1/1. In terms of biological role, catalyzes the reversible interconversion of serine and glycine with tetrahydrofolate (THF) serving as the one-carbon carrier. This reaction serves as the major source of one-carbon groups required for the biosynthesis of purines, thymidylate, methionine, and other important biomolecules. Also exhibits THF-independent aldolase activity toward beta-hydroxyamino acids, producing glycine and aldehydes, via a retro-aldol mechanism. The polypeptide is Serine hydroxymethyltransferase (Thermosipho melanesiensis (strain DSM 12029 / CIP 104789 / BI429)).